The following is a 320-amino-acid chain: tRNA dimethylallyltransferase (320 aa).

5–12 contributes to the ATP binding site; that stretch reads GPTAVGKS. 7–12 is a substrate binding site; sequence TAVGKS. An interaction with substrate tRNA region spans residues 30–33; that stretch reads DSMQ.

This sequence belongs to the IPP transferase family. As to quaternary structure, monomer. Mg(2+) is required as a cofactor.

The enzyme catalyses adenosine(37) in tRNA + dimethylallyl diphosphate = N(6)-dimethylallyladenosine(37) in tRNA + diphosphate. Its function is as follows. Catalyzes the transfer of a dimethylallyl group onto the adenine at position 37 in tRNAs that read codons beginning with uridine, leading to the formation of N6-(dimethylallyl)adenosine (i(6)A). In Heliobacterium modesticaldum (strain ATCC 51547 / Ice1), this protein is tRNA dimethylallyltransferase.